A 382-amino-acid chain; its full sequence is Na(+)/H(+) antiporter NhaA (382 aa).

10 helical membrane-spanning segments follow: residues 11–31 (FSVP…LDPA), 47–67 (FHFV…AVEI), 88–108 (LATL…NAII), 116–136 (GWGI…RLVF), 145–165 (FLLL…AVFY), 170–190 (HPTE…AYIL), 261–283 (IVVD…SSVG), 299–319 (LGIF…PQQV), 327–347 (TGLV…VAFV), and 353–373 (GSAK…IMLG).

Belongs to the NhaA Na(+)/H(+) (TC 2.A.33) antiporter family.

It is found in the cell inner membrane. It catalyses the reaction Na(+)(in) + 2 H(+)(out) = Na(+)(out) + 2 H(+)(in). In terms of biological role, na(+)/H(+) antiporter that extrudes sodium in exchange for external protons. This chain is Na(+)/H(+) antiporter NhaA, found in Geobacter sulfurreducens (strain ATCC 51573 / DSM 12127 / PCA).